A 675-amino-acid chain; its full sequence is UvrABC system protein B (675 aa).

The region spanning 35–192 (QGMRDGLMYQ…ARLVAMQYTR (158 aa)) is the Helicase ATP-binding domain. 48-55 (GVTGSGKT) provides a ligand contact to ATP. The Beta-hairpin motif lies at 101-124 (YYDYYQPEAYVPTRDLFIEKDSSI). The Helicase C-terminal domain maps to 439–605 (QVDDLLGEIK…GVNKAVRELI (167 aa)). The 36-residue stretch at 633–668 (AREIRRLEKLMTDHARNLEFEQAAAARDALNALKQR) folds into the UVR domain.

Belongs to the UvrB family. Forms a heterotetramer with UvrA during the search for lesions. Interacts with UvrC in an incision complex.

The protein localises to the cytoplasm. In terms of biological role, the UvrABC repair system catalyzes the recognition and processing of DNA lesions. A damage recognition complex composed of 2 UvrA and 2 UvrB subunits scans DNA for abnormalities. Upon binding of the UvrA(2)B(2) complex to a putative damaged site, the DNA wraps around one UvrB monomer. DNA wrap is dependent on ATP binding by UvrB and probably causes local melting of the DNA helix, facilitating insertion of UvrB beta-hairpin between the DNA strands. Then UvrB probes one DNA strand for the presence of a lesion. If a lesion is found the UvrA subunits dissociate and the UvrB-DNA preincision complex is formed. This complex is subsequently bound by UvrC and the second UvrB is released. If no lesion is found, the DNA wraps around the other UvrB subunit that will check the other stand for damage. The polypeptide is UvrABC system protein B (Bordetella petrii (strain ATCC BAA-461 / DSM 12804 / CCUG 43448)).